Here is a 73-residue protein sequence, read N- to C-terminus: MGSFSIWHWLIVLVIVMLVFGTKKLRNIGQDLGGAVKGFKDGMKTFEEPKEQIQQSSATAEKTVDVQAKDVNK.

The helical transmembrane segment at methionine 1–glycine 21 threads the bilayer. The disordered stretch occupies residues lysine 50–lysine 73. The segment covering lysine 62–lysine 73 has biased composition (basic and acidic residues).

Belongs to the TatA/E family. As to quaternary structure, the Tat system comprises two distinct complexes: a TatABC complex, containing multiple copies of TatA, TatB and TatC subunits, and a separate TatA complex, containing only TatA subunits. Substrates initially bind to the TatABC complex, which probably triggers association of the separate TatA complex to form the active translocon.

It is found in the cell inner membrane. Functionally, part of the twin-arginine translocation (Tat) system that transports large folded proteins containing a characteristic twin-arginine motif in their signal peptide across membranes. TatA could form the protein-conducting channel of the Tat system. This Polynucleobacter necessarius subsp. necessarius (strain STIR1) protein is Sec-independent protein translocase protein TatA.